We begin with the raw amino-acid sequence, 454 residues long: tRNA modification GTPase MnmE (454 aa).

(6S)-5-formyl-5,6,7,8-tetrahydrofolate is bound by residues R23, E80, and K120. Residues 216 to 377 (GMKVVIAGRP…LRDHLKQSMG (162 aa)) enclose the TrmE-type G domain. N226 contributes to the K(+) binding site. GTP contacts are provided by residues 226-231 (NAGKSS), 245-251 (TDIAGTT), 270-273 (DTAG), 335-338 (NKAD), and 358-360 (SAR). Residue S230 coordinates Mg(2+). The K(+) site is built by T245, I247, and T250. Residue T251 coordinates Mg(2+). Position 454 (K454) interacts with (6S)-5-formyl-5,6,7,8-tetrahydrofolate.

The protein belongs to the TRAFAC class TrmE-Era-EngA-EngB-Septin-like GTPase superfamily. TrmE GTPase family. In terms of assembly, homodimer. Heterotetramer of two MnmE and two MnmG subunits. K(+) serves as cofactor.

It localises to the cytoplasm. In terms of biological role, exhibits a very high intrinsic GTPase hydrolysis rate. Involved in the addition of a carboxymethylaminomethyl (cmnm) group at the wobble position (U34) of certain tRNAs, forming tRNA-cmnm(5)s(2)U34. In Pectobacterium carotovorum subsp. carotovorum (strain PC1), this protein is tRNA modification GTPase MnmE.